Consider the following 427-residue polypeptide: Adenylosuccinate synthetase (427 aa).

Residues Gly-12–Lys-18 and Gly-40–Thr-42 contribute to the GTP site. Asp-13 functions as the Proton acceptor in the catalytic mechanism. Mg(2+) is bound by residues Asp-13 and Gly-40. IMP contacts are provided by residues Asp-13 to Lys-16, Asn-38 to His-41, Thr-128, Arg-142, Gln-223, Thr-238, and Arg-302. His-41 functions as the Proton donor in the catalytic mechanism. Residue Val-298 to Arg-304 coordinates substrate. GTP is bound by residues Arg-304, Lys-330–Asp-332, and Gly-412–Gly-414.

Belongs to the adenylosuccinate synthetase family. Homodimer. It depends on Mg(2+) as a cofactor.

It is found in the cytoplasm. The catalysed reaction is IMP + L-aspartate + GTP = N(6)-(1,2-dicarboxyethyl)-AMP + GDP + phosphate + 2 H(+). The protein operates within purine metabolism; AMP biosynthesis via de novo pathway; AMP from IMP: step 1/2. Its function is as follows. Plays an important role in the de novo pathway of purine nucleotide biosynthesis. Catalyzes the first committed step in the biosynthesis of AMP from IMP. The sequence is that of Adenylosuccinate synthetase from Streptomyces griseus subsp. griseus (strain JCM 4626 / CBS 651.72 / NBRC 13350 / KCC S-0626 / ISP 5235).